The following is a 967-amino-acid chain: Transmembrane channel-like protein 5 (967 aa).

4 stretches are compositionally biased toward polar residues: residues Met1–Tyr10, Gly21–Glu31, Asn53–Asn62, and Gln168–Pro184. The tract at residues Met1–Lys240 is disordered. The Extracellular portion of the chain corresponds to Met1–Lys420. Residues Phe421–Gly441 form a helical membrane-spanning segment. The Cytoplasmic segment spans residues Ala442–Thr449. The helical transmembrane segment at Gly450 to Tyr470 threads the bilayer. Residues Thr471–Gln487 lie on the Extracellular side of the membrane. The chain crosses the membrane as a helical span at residues Leu488–Ser508. Topologically, residues Met509 to His581 are cytoplasmic. The chain crosses the membrane as a helical span at residues Val582–Leu602. Residues Ala603 to Pro616 are Extracellular-facing. The helical transmembrane segment at Gly617–Tyr637 threads the bilayer. The Cytoplasmic segment spans residues Ser638–Asn660. The chain crosses the membrane as a helical span at residues Ile661–Leu681. Residues Ser682–Asp694 are Extracellular-facing. Residues Ile695 to Phe715 form a helical membrane-spanning segment. Over Leu716–Trp749 the chain is Cytoplasmic. A helical membrane pass occupies residues Leu750–Phe770. Over Tyr771–Phe796 the chain is Extracellular. Residues Phe797–Ile817 traverse the membrane as a helical segment. Topologically, residues Trp818–Asn861 are cytoplasmic. Residues Leu862 to Leu882 traverse the membrane as a helical segment. The Extracellular segment spans residues Tyr883–Ala967.

Belongs to the TMC family. As to expression, ubiquitously expressed.

It is found in the membrane. Functionally, probable component of an ion channel. Molecular function hasn't been characterized yet. The chain is Transmembrane channel-like protein 5 from Mus musculus (Mouse).